The primary structure comprises 126 residues: Aspartate 1-decarboxylase (126 aa).

Residue S25 is the Schiff-base intermediate with substrate; via pyruvic acid of the active site. Residue S25 is modified to Pyruvic acid (Ser). T57 is a binding site for substrate. Y58 functions as the Proton donor in the catalytic mechanism. G73–A75 contributes to the substrate binding site.

This sequence belongs to the PanD family. In terms of assembly, heterooctamer of four alpha and four beta subunits. Requires pyruvate as cofactor. In terms of processing, is synthesized initially as an inactive proenzyme, which is activated by self-cleavage at a specific serine bond to produce a beta-subunit with a hydroxyl group at its C-terminus and an alpha-subunit with a pyruvoyl group at its N-terminus.

It localises to the cytoplasm. It catalyses the reaction L-aspartate + H(+) = beta-alanine + CO2. Its pathway is cofactor biosynthesis; (R)-pantothenate biosynthesis; beta-alanine from L-aspartate: step 1/1. Its function is as follows. Catalyzes the pyruvoyl-dependent decarboxylation of aspartate to produce beta-alanine. In Xanthomonas axonopodis pv. citri (strain 306), this protein is Aspartate 1-decarboxylase.